Reading from the N-terminus, the 78-residue chain is uncharacterized protein (78 aa).

This is an uncharacterized protein from Schizosaccharomyces pombe (strain 972 / ATCC 24843) (Fission yeast).